A 175-amino-acid polypeptide reads, in one-letter code: Adenine phosphoribosyltransferase (175 aa).

This sequence belongs to the purine/pyrimidine phosphoribosyltransferase family. Homodimer.

The protein localises to the cytoplasm. It carries out the reaction AMP + diphosphate = 5-phospho-alpha-D-ribose 1-diphosphate + adenine. The protein operates within purine metabolism; AMP biosynthesis via salvage pathway; AMP from adenine: step 1/1. Functionally, catalyzes a salvage reaction resulting in the formation of AMP, that is energically less costly than de novo synthesis. The polypeptide is Adenine phosphoribosyltransferase (Synechococcus sp. (strain CC9902)).